The chain runs to 396 residues: L-cysteine desulfidase (396 aa).

Cys23 (proton acceptor) is an active-site residue. [4Fe-4S] cluster-binding residues include Cys288, Cys330, and Cys337.

The protein belongs to the L-cysteine desulfidase family. In terms of assembly, homotrimer. [4Fe-4S] cluster is required as a cofactor.

It carries out the reaction L-cysteine + H2O = hydrogen sulfide + pyruvate + NH4(+) + H(+). In terms of biological role, catalyzes the cleavage of L-cysteine to form 2-aminoprop-2-enoate and sulfide. The former then spontaneously hydrolyzes to pyruvate and NH(3). May be responsible for the production of sulfide required for the biosynthesis of iron-sulfur centers in this archaea. In Methanococcus maripaludis (strain C6 / ATCC BAA-1332), this protein is L-cysteine desulfidase.